The sequence spans 586 residues: Protein cereblon (586 aa).

Disordered stretches follow at residues 1–114 (MDDE…LPRW) and 158–194 (SQERRRSRTSEETSQEDVEQPEDPPPQQPPRPPIDIG). Residues 14 to 37 (GRDEDVQLEDHSQAQGLQDRRVDA) show a composition bias toward basic and acidic residues. Acidic residues predominate over residues 75–85 (MVEDGLQDDTA). The span at 86 to 96 (SEGSHPSSDMS) shows a compositional bias: polar residues. Residues 159 to 168 (QERRRSRTSE) are compositionally biased toward basic and acidic residues. The span at 170-179 (TSQEDVEQPE) shows a compositional bias: acidic residues. The segment covering 180–190 (DPPPQQPPRPP) has biased composition (pro residues). In terms of domain architecture, Lon N-terminal spans 226 to 452 (HMLIFLHQHI…LIKSTFTDES (227 aa)). Positions 451–560 (ESLFFCRYCN…LAGSSVRIGK (110 aa)) constitute a CULT domain. The Zn(2+) site is built by C456, C459, C525, and C528.

It belongs to the CRBN family. Likely a component of a DCX (DDB1-CUL4-X-box) protein ligase complex. May interact with pic/DDB1. Post-translationally, ubiquitinated.

It is found in the nucleus. It participates in protein modification; protein ubiquitination. In terms of biological role, substrate recognition component of a DCX (DDB1-CUL4-X-box) E3 protein ligase complex that mediates the ubiquitination and subsequent proteasomal degradation of target proteins. Has an essential role in mediating growth by negatively regulating insulin signaling. It also has a role in maintaining presynaptic function in the neuromuscular junction synapses of third-instar larvae. This is Protein cereblon from Drosophila erecta (Fruit fly).